The primary structure comprises 313 residues: Expansin-like A4 (313 aa).

The signal sequence occupies residues 1–30; the sequence is MDDNGDVHFCHRATAVVALLLLHLVVVANA. The Expansin-like EG45 domain occupies 59–173; it reads GGACGFGAAP…RRIPCEYRES (115 aa). N124 is a glycosylation site (N-linked (GlcNAc...) asparagine). The Expansin-like CBD domain occupies 188–281; sequence THLAIRFLYQ…DWRPGEVYDT (94 aa).

This sequence belongs to the expansin family. Expansin-like A subfamily.

Its subcellular location is the secreted. The sequence is that of Expansin-like A4 (EXLA4) from Oryza sativa subsp. japonica (Rice).